Reading from the N-terminus, the 302-residue chain is uncharacterized protein (302 aa).

It belongs to the HAD-like hydrolase superfamily.

It localises to the cytoplasm. The protein localises to the nucleus. This is an uncharacterized protein from Schizosaccharomyces pombe (strain 972 / ATCC 24843) (Fission yeast).